The sequence spans 468 residues: Arginine biosynthesis bifunctional protein ArgJ, mitochondrial (468 aa).

A mitochondrion-targeting transit peptide spans 1-23 (MVGFSRCALSQLRQPKAQLVRSF). 6 residues coordinate substrate: threonine 198, lysine 227, threonine 238, glutamate 324, asparagine 463, and threonine 468. The Nucleophile role is filled by threonine 238.

It belongs to the ArgJ family. In terms of assembly, heterodimer of an alpha and a beta chain. The alpha and beta chains are autoproteolytically processed from a single precursor protein within the mitochondrion.

Its subcellular location is the mitochondrion matrix. It catalyses the reaction N(2)-acetyl-L-ornithine + L-glutamate = N-acetyl-L-glutamate + L-ornithine. The catalysed reaction is L-glutamate + acetyl-CoA = N-acetyl-L-glutamate + CoA + H(+). Its pathway is amino-acid biosynthesis; L-arginine biosynthesis; L-ornithine and N-acetyl-L-glutamate from L-glutamate and N(2)-acetyl-L-ornithine (cyclic): step 1/1. It functions in the pathway amino-acid biosynthesis; L-arginine biosynthesis; N(2)-acetyl-L-ornithine from L-glutamate: step 1/4. Its function is as follows. Catalyzes two activities which are involved in the cyclic version of arginine biosynthesis: the synthesis of acetylglutamate from glutamate and acetyl-CoA, and of ornithine by transacetylation between acetylornithine and glutamate. The sequence is that of Arginine biosynthesis bifunctional protein ArgJ, mitochondrial from Podospora anserina (strain S / ATCC MYA-4624 / DSM 980 / FGSC 10383) (Pleurage anserina).